Here is a 2486-residue protein sequence, read N- to C-terminus: Nonribosomal peptide synthetase nanA (2486 aa).

Residues 231–637 (FSARQPLSPA…GRRGTQVKLR (407 aa)) form an adenylation 1 region. One can recognise a Carrier 1 domain in the interval 786–860 (TDIELKVHAL…DLARSAKETS (75 aa)). An O-(pantetheine 4'-phosphoryl)serine modification is found at Ser-820. The condensation 1 stretch occupies residues 902–1314 (EDAYPCTPLQ…LKSVPRVSSQ (413 aa)). The segment at 1339–1735 (RAQARKTPLA…GRIGDQMKIR (397 aa)) is adenylation 2. 2 Carrier domains span residues 1872 to 1948 (PPST…SSAS) and 2404 to 2480 (SSSE…QTQA). O-(pantetheine 4'-phosphoryl)serine occurs at positions 1909 and 2441. Positions 2404 to 2480 (SSSETIVEPL…KLARLLQTQA (77 aa)) are condensation 2.

The protein belongs to the NRP synthetase family.

The protein operates within secondary metabolite biosynthesis. In terms of biological role, nonribosomal peptide synthetase; part of the gene cluster that mediates the biosynthesis of the benzazepine alkaloid nanangelenin A which contains an unprecedented 3,4-dihydro-1-benzazepine-2,5-dione-N-prenyl-N-acetoxy-anthranilamide scaffold. The first step of nanangelenin biosynthesis is catalyzed by the indoleamine 2,3-dioxygenase nanC which produces N-formyl-kynurenine through the catabolism of tryptophan. The two-module NRPS nanA then utilizes anthranilate (Ant) and L-kynurenine (L-Kyn) to assemble the dipeptide product nanangelenin B. The first adenylation domain of nanA (A1) loads anthranilate onto the T1 domain, while A2 loads kynurenine, generated through spontaneous nonenzymatic deformylation of the nanC-supplied N-formyl-kynurenine. The peptide bond formation between the tethered amino acids is catalyzed by the first condensation domain (C1) between anthranilate's carbonyl carbon and kynurenine's aliphatic primary amine. The second C domain (C2) catalyzes the final cyclization event between the aromatic amine of kynurenine and the tethered carbonyl carbon, yielding nanangelenin B. The terminal T3 domain enhances the catalytic efficiency of C2, suggesting the T2-tethered Ant-L-Kyn is transferred to T3 prior to cyclization by C2. Once released from nanA, nanangelenin B is then prenylated by the prenyltransferase nanD to form nanangelenin C. Nanangelenin C is then N-hydroxylated by the FAD-dependent monooxygenase nanF and further acetylated by the acetyltransferase nanB to yield nanangelenin F. Finally, the N-methyltransferase nanE methylates the amide nitrogen of 1-benzazepine to convert nanangelenin F into nanangelenin A. NanE is also able to methylate most of the intermediates of the pathway such as nanangelenin B and nanangelenin C to produce nanangelenin D and nanangelenin E, respectively. The polypeptide is Nonribosomal peptide synthetase nanA (Aspergillus nanangensis).